The chain runs to 134 residues: Acyl carrier protein, chloroplastic (134 aa).

Residues 1–51 (MSTTFCSSVSMQATSLAATTRISFQKPGLVSRTNLSFNLRRSIPTRLSVSC) constitute a chloroplast transit peptide. The region spanning 55–130 (PETVEKVSKI…EAAELIEELV (76 aa)) is the Carrier domain. Ser90 carries the post-translational modification O-(pantetheine 4'-phosphoryl)serine.

Belongs to the acyl carrier protein (ACP) family. Post-translationally, 4'-phosphopantetheine is transferred from CoA to a specific serine of apo-ACP by acpS. This modification is essential for activity because fatty acids are bound in thioester linkage to the sulfhydryl of the prosthetic group. In terms of tissue distribution, seed.

The protein localises to the plastid. It localises to the chloroplast. It functions in the pathway lipid metabolism; fatty acid biosynthesis. In terms of biological role, carrier of the growing fatty acid chain in fatty acid biosynthesis. In Brassica napus (Rape), this protein is Acyl carrier protein, chloroplastic (ACL1.A2).